The sequence spans 223 residues: Phosphoribosylformylglycinamidine synthase subunit PurQ (223 aa).

Residues 3 to 223 form the Glutamine amidotransferase type-1 domain; that stretch reads SAVILLPGLN…LFAGALGITA (221 aa). The active-site Nucleophile is the Cys-87. Active-site residues include His-197 and Glu-199.

Part of the FGAM synthase complex composed of 1 PurL, 1 PurQ and 2 PurS subunits.

The protein resides in the cytoplasm. It catalyses the reaction N(2)-formyl-N(1)-(5-phospho-beta-D-ribosyl)glycinamide + L-glutamine + ATP + H2O = 2-formamido-N(1)-(5-O-phospho-beta-D-ribosyl)acetamidine + L-glutamate + ADP + phosphate + H(+). The enzyme catalyses L-glutamine + H2O = L-glutamate + NH4(+). It participates in purine metabolism; IMP biosynthesis via de novo pathway; 5-amino-1-(5-phospho-D-ribosyl)imidazole from N(2)-formyl-N(1)-(5-phospho-D-ribosyl)glycinamide: step 1/2. Part of the phosphoribosylformylglycinamidine synthase complex involved in the purines biosynthetic pathway. Catalyzes the ATP-dependent conversion of formylglycinamide ribonucleotide (FGAR) and glutamine to yield formylglycinamidine ribonucleotide (FGAM) and glutamate. The FGAM synthase complex is composed of three subunits. PurQ produces an ammonia molecule by converting glutamine to glutamate. PurL transfers the ammonia molecule to FGAR to form FGAM in an ATP-dependent manner. PurS interacts with PurQ and PurL and is thought to assist in the transfer of the ammonia molecule from PurQ to PurL. The polypeptide is Phosphoribosylformylglycinamidine synthase subunit PurQ (Brucella suis biovar 1 (strain 1330)).